The following is a 362-amino-acid chain: Myricetin 3'/5'-O-methyltransferase 1 (362 aa).

Position 229 (Asp-229) interacts with S-adenosyl-L-methionine. The Proton acceptor role is filled by His-267.

Belongs to the class I-like SAM-binding methyltransferase superfamily. Cation-independent O-methyltransferase family. As to quaternary structure, homodimer. In terms of tissue distribution, mainly expressed in leaves secreting glandular trichomes types 1 and 4 and, to a lesser extent, in storage trichomes type 6.

It catalyses the reaction myricetin + S-adenosyl-L-methionine = laricitrin + S-adenosyl-L-homocysteine + H(+). The catalysed reaction is laricitrin + S-adenosyl-L-methionine = syringetin + S-adenosyl-L-homocysteine + H(+). The enzyme catalyses a 3'-hydroxyflavone + S-adenosyl-L-methionine = a 3'-methoxyflavone + S-adenosyl-L-homocysteine + H(+). It carries out the reaction a 5'-hydroxy-3'-methoxyflavone + S-adenosyl-L-methionine = a 3',5'-dimethoxyflavone + S-adenosyl-L-homocysteine + H(+). It catalyses the reaction quercetin + S-adenosyl-L-methionine = isorhamnetin + S-adenosyl-L-homocysteine + H(+). The catalysed reaction is rhamnetin + S-adenosyl-L-methionine = rhamnacene + S-adenosyl-L-homocysteine + H(+). The enzyme catalyses 3',4',5,7-tetrahydroxy-3-methoxyflavone + S-adenosyl-L-methionine = 3,3'-O-dimethylquercetin + S-adenosyl-L-homocysteine + H(+). Its pathway is flavonoid metabolism. Functionally, flavonoid 3'/5'-O-methyltransferase involved in the biosynthesis of polymethoxylated flavonoids natural products such as myricetin derivatives, aroma compounds possessing antioxidant properties and exhibiting pharmacological activities such as anti-carcinogen, anti-viral, anti-thrombotic, anti-diabetic, anti-atherosclerotic, and anti-inflammatory effects. Catalyzes S-adenosylmethionine-dependent regioselective 3'/5'-O-methylation of flavonoids; active on various hydroxylated flavonoid substrates, including myricetin and quercetin, but inactive toward kaempferol. Mediates the formation of 3'-methyl derivatives from quercetin, myricetin, 3-methyl quercetin and 7-methyl quercetin (rhamnetin), producing 3'-methyl quercetin (isorhamnetin), 3'-methyl myricetin (laricitrin), 3,3'-dimethyl quercetin (3-O-methylisorhamnetin) and 7,3'-dimethyl quercetin (7-O-methylisorhamnetin), respectively. Triggers the 5'-O-methylation of 3'-methyl myricetin (laricitrin), thus leading to production of 3',5'-dimethyl myricetin (syringetin). The polypeptide is Myricetin 3'/5'-O-methyltransferase 1 (Solanum habrochaites (Wild tomato)).